A 524-amino-acid polypeptide reads, in one-letter code: L-tyrosine:2-oxoglutarate aminotransferase atrD (524 aa).

The protein belongs to the class-I pyridoxal-phosphate-dependent aminotransferase family. Pyridoxal 5'-phosphate is required as a cofactor.

The catalysed reaction is L-tyrosine + 2-oxoglutarate = 3-(4-hydroxyphenyl)pyruvate + L-glutamate. Its pathway is secondary metabolite biosynthesis. Its function is as follows. The L-tyrosine:2-oxoglutarate aminotransferase atrD and the atromentin synthetase atrA catalyze consecutive steps to turn over L-tyrosine into atromentin, which represents the generic precursor molecule for the entire terphenylquinone and pulvinic acid family of pigments, which are widely distributed secondary metabolites in homobasidiomycetes. The first step is catalyzed by atrD which converts L-tyrosine in to 4-hydroxyphenylpyruvate (4-HPP). Adenylation of two 4-HPP monomers by the atrA adenylation (A) domain, ester bond formation between monomers and atrA, and symmetric C-C-bond formation between two monomers by atrA leads to atromentin. The polypeptide is L-tyrosine:2-oxoglutarate aminotransferase atrD (Tapinella panuoides (Oyster rollrim mushroom)).